The following is a 179-amino-acid chain: tRNA (cytidine(56)-2'-O)-methyltransferase (179 aa).

Residues Leu82, 112-116 (GAEKV), and 130-137 (VGNQPHSE) contribute to the S-adenosyl-L-methionine site.

It belongs to the aTrm56 family. In terms of assembly, homodimer.

The protein resides in the cytoplasm. The catalysed reaction is cytidine(56) in tRNA + S-adenosyl-L-methionine = 2'-O-methylcytidine(56) in tRNA + S-adenosyl-L-homocysteine + H(+). Specifically catalyzes the AdoMet-dependent 2'-O-ribose methylation of cytidine at position 56 in tRNAs. This chain is tRNA (cytidine(56)-2'-O)-methyltransferase, found in Methanococcus maripaludis (strain DSM 14266 / JCM 13030 / NBRC 101832 / S2 / LL).